Consider the following 96-residue polypeptide: Prokineticin Bo8 (96 aa).

An N-terminal signal peptide occupies residues 1–19 (MKCFAQIVVLLLVIAFSHG). 5 disulfide bridges follow: C26/C38, C32/C50, C37/C78, C60/C86, and C80/C95.

In terms of tissue distribution, expressed by the skin glands.

The protein resides in the secreted. Functionally, potent agonist for both PKR1/PROKR1 and PKR2/PROKR2, and inducer of a potent and long-lasting hyperalgesia. Also potentiates capsaicin-induced TRPV1 current, when tested on DRG neurons. At subnanomolar concentrations, this protein both induces potent chemotaxis of macrophages and stimulates LPS-induced production of the pro-inflammatory cytokines IL-1 and IL-12. In vivo, potently stimulates the contraction of the guinea-pig gastrointestinal (GI) smooth muscle (nanomolar concentration). This Bombina orientalis (Oriental fire-bellied toad) protein is Prokineticin Bo8.